A 142-amino-acid chain; its full sequence is MGAPSLPRAWQLYLKEHRVSTFKNWPFVNGCSCTPERMAEAGFIHCPTENEPDLAQCFFCFKELEGWEPDDNPIEEHKKHSSGCAFLSVKKQFEELTLSEFLKLDKERAKNKIAKETNSKQKEFEETAAKVRQAMEQLAALE.

One copy of the BIR repeat lies at 18–88 (RVSTFKNWPF…KHSSGCAFLS (71 aa)). A Phosphoserine; by AURKC modification is found at serine 20. Lysine 23 is modified (N6-acetyllysine). Threonine 34 is modified (phosphothreonine; by CDK1 and CDK15). Threonine 48 is modified (phosphothreonine; by CK2; in vitro). Zn(2+) is bound by residues cysteine 57, cysteine 60, histidine 77, and cysteine 84. N6-acetyllysine is present on residues lysine 90, lysine 110, lysine 112, and lysine 115. A Phosphothreonine; by AURKB modification is found at threonine 117.

This sequence belongs to the IAP family. In terms of assembly, monomer or homodimer. Exists as a homodimer in the apo state and as a monomer in the CPC-bound state. The monomer protects cells against apoptosis more efficiently than the dimer. Only the dimeric form is capable of enhancing tubulin stability in cells. When phosphorylated, interacts with LAMTOR5/HBXIP; the resulting complex binds pro-CASP9, as well as active CASP9, but much less efficiently. Component of the chromosomal passenger complex (CPC) composed of at least BIRC5/survivin, CDCA8/borealin, INCENP, AURKB or AURKC; in the complex forms a triple-helix bundle-based subcomplex with INCENP and CDCA8. Interacts with JTB. Interacts (via BIR domain) with histone H3 phosphorylated at 'Thr-3' (H3pT3). Interacts with EVI5. Interacts with GTP-bound RAN in both the S and M phases of the cell cycle. Interacts with USP9X. Interacts with tubulin. Interacts with BIRC2/c-IAP1. The monomeric form interacts with XIAP/BIRC4. Both the dimeric and monomeric form can interact with DIABLO/SMAC. Interacts with BIRC6/bruce. Interacts with FBXL7; this interaction facilitates the polyubiquitination and subsequent proteasomal degradation of BIRC5 by the SCF(FBXL7) E3 ubiquitin-protein ligase complex. In terms of processing, ubiquitinated by the Cul9-RING ubiquitin-protein ligase complex, leading to its degradation. Ubiquitination is required for centrosomal targeting. Deubiquitinated by USP35 or USP38; leading to stabilization. In vitro phosphorylation at Thr-117 by AURKB prevents interaction with INCENP and localization to mitotic chromosomes. Phosphorylation at Thr-48 by CK2 is critical for its mitotic and anti-apoptotic activities. Phosphorylation at Thr-34 by CDK15 is critical for its anti-apoptotic activity. Phosphorylation at Ser-20 by AURKC is critical for regulation of proper chromosome alignment and segregation, and possibly cytokinesis. In terms of tissue distribution, expressed in spleen, lung, brain, heart, kidney and intestine (at protein level). Expressed in cochlea including the organ of Corti, the lateral wall, the interdental cells of the Limbus as well as in cells of the cochlear nerve and the spiral ganglions (at protein level). Also expressed in Schwann cells (at protein level). Not expressed in cells of the inner and outer sulcus or the Reissner's membrane (at protein level).

The protein resides in the cytoplasm. Its subcellular location is the nucleus. It is found in the chromosome. It localises to the centromere. The protein localises to the cytoskeleton. The protein resides in the spindle. Its subcellular location is the kinetochore. It is found in the midbody. Functionally, multitasking protein that has dual roles in promoting cell proliferation and preventing apoptosis. Component of a chromosome passage protein complex (CPC) which is essential for chromosome alignment and segregation during mitosis and cytokinesis. Acts as an important regulator of the localization of this complex; directs CPC movement to different locations from the inner centromere during prometaphase to midbody during cytokinesis and participates in the organization of the center spindle by associating with polymerized microtubules. Involved in the recruitment of CPC to centromeres during early mitosis via association with histone H3 phosphorylated at 'Thr-3' (H3pT3) during mitosis. The complex with RAN plays a role in mitotic spindle formation by serving as a physical scaffold to help deliver the RAN effector molecule TPX2 to microtubules. May counteract a default induction of apoptosis in G2/M phase. The acetylated form represses STAT3 transactivation of target gene promoters. May play a role in neoplasia. Inhibitor of CASP3 and CASP7. Essential for the maintenance of mitochondrial integrity and function. In Cavia porcellus (Guinea pig), this protein is Baculoviral IAP repeat-containing protein 5.